Consider the following 71-residue polypeptide: U-scoloptoxin(21)-Sm1a (71 aa).

A signal peptide spans 1–21; sequence MKSVIFALFLVYLLIVRAAEA. Positions 45 to 71 are disordered; it reads IELANDPNGPGRRRRAPAENEDFLKHS. Residues 60-71 show a composition bias toward basic and acidic residues; the sequence is APAENEDFLKHS.

This sequence belongs to the scoloptoxin-21 family. Expressed by the venom gland.

Its subcellular location is the secreted. The chain is U-scoloptoxin(21)-Sm1a from Scolopendra morsitans (Tanzanian blue ringleg centipede).